The following is a 140-amino-acid chain: Gonadotropin subunit beta-2 (140 aa).

The first 24 residues, 1 to 24 (MSVYPECTWLLFVCLCHLLVSAGG), serve as a signal peptide directing secretion. 6 cysteine pairs are disulfide-bonded: C30-C78, C44-C93, C47-C131, C55-C109, C59-C111, and C114-C121. An N-linked (GlcNAc...) asparagine glycan is attached at N34.

Belongs to the glycoprotein hormones subunit beta family. In terms of assembly, heterodimer of an alpha and a beta chain.

The protein resides in the secreted. Its function is as follows. Involved in gametogenesis and steroidogenesis. The polypeptide is Gonadotropin subunit beta-2 (cgbb) (Anguilla anguilla (European freshwater eel)).